Consider the following 418-residue polypeptide: CinA-like protein (418 aa).

Belongs to the CinA family.

The polypeptide is CinA-like protein (Leptospira borgpetersenii serovar Hardjo-bovis (strain L550)).